A 192-amino-acid chain; its full sequence is Nucleoside triphosphate pyrophosphatase (192 aa).

Asp-73 acts as the Proton acceptor in catalysis.

It belongs to the Maf family. A divalent metal cation serves as cofactor.

It localises to the cytoplasm. The enzyme catalyses a ribonucleoside 5'-triphosphate + H2O = a ribonucleoside 5'-phosphate + diphosphate + H(+). It carries out the reaction a 2'-deoxyribonucleoside 5'-triphosphate + H2O = a 2'-deoxyribonucleoside 5'-phosphate + diphosphate + H(+). Functionally, nucleoside triphosphate pyrophosphatase. May have a dual role in cell division arrest and in preventing the incorporation of modified nucleotides into cellular nucleic acids. The protein is Nucleoside triphosphate pyrophosphatase of Ehrlichia canis (strain Jake).